The sequence spans 695 residues: DNA topoisomerase 4 subunit B (695 aa).

The interval 1–53 (MSSSDKIPSLFGDDDALAPVPAAPFKASVEPRVEPTPRPIPPPPPSKTASAPG) is disordered. The segment covering 36 to 46 (TPRPIPPPPPS) has biased composition (pro residues). ATP contacts are provided by residues Tyr-55, Asn-95, Asp-122, 164–170 (GLHGVGA), and Lys-397. The Toprim domain occupies 477–591 (AELFIVEGDS…GGHLFLALPP (115 aa)). Mg(2+) contacts are provided by Glu-483, Asp-556, and Asp-558.

Belongs to the type II topoisomerase family. ParE type 1 subfamily. Heterotetramer composed of ParC and ParE. Mg(2+) serves as cofactor. It depends on Mn(2+) as a cofactor. The cofactor is Ca(2+).

It catalyses the reaction ATP-dependent breakage, passage and rejoining of double-stranded DNA.. Its function is as follows. Topoisomerase IV is essential for chromosome segregation. It relaxes supercoiled DNA. Performs the decatenation events required during the replication of a circular DNA molecule. This is DNA topoisomerase 4 subunit B from Caulobacter vibrioides (strain ATCC 19089 / CIP 103742 / CB 15) (Caulobacter crescentus).